Reading from the N-terminus, the 140-residue chain is MKFTKSIREEDVKRDWILIDAKDKVFGRIITEIATILRGKHKPYYTPHVDCGDYVVVINADKVKFSTSKKLEDKYYKHTGYFGNLKEETVEKLLNNNPEKLFKLATRGMLPKTKLGRKMLKKLKVYAGENHPHTAQVKGN.

It belongs to the universal ribosomal protein uL13 family. In terms of assembly, part of the 50S ribosomal subunit.

Its function is as follows. This protein is one of the early assembly proteins of the 50S ribosomal subunit, although it is not seen to bind rRNA by itself. It is important during the early stages of 50S assembly. This is Large ribosomal subunit protein uL13 from Nautilia profundicola (strain ATCC BAA-1463 / DSM 18972 / AmH).